Reading from the N-terminus, the 156-residue chain is Ribosomal RNA large subunit methyltransferase H (156 aa).

S-adenosyl-L-methionine is bound by residues leucine 73, glycine 104, and 123 to 128 (LSSLTL).

Belongs to the RNA methyltransferase RlmH family. In terms of assembly, homodimer.

It is found in the cytoplasm. The catalysed reaction is pseudouridine(1915) in 23S rRNA + S-adenosyl-L-methionine = N(3)-methylpseudouridine(1915) in 23S rRNA + S-adenosyl-L-homocysteine + H(+). In terms of biological role, specifically methylates the pseudouridine at position 1915 (m3Psi1915) in 23S rRNA. This Ralstonia pickettii (strain 12J) protein is Ribosomal RNA large subunit methyltransferase H.